Reading from the N-terminus, the 90-residue chain is Hypnin-A3 (90 aa).

Its function is as follows. Lectin specific for core(alpha 1-6)fucosylated N-glycans. Inhibits platelet aggregation. This Hypnea japonica (Japanese red alga) protein is Hypnin-A3.